The sequence spans 561 residues: MAKERCLKKSFQDSLEDIKKRMKEKRNKNLAEIGKRRSFIAAPCQIITNTSTLLKNYQDNNKMLVLALENEKSKVKEAQDIILQLRKECYYLTCQLYALKGKLTSQQTVEPAQNQEICSSGMDPNSDDSSRNLFVKDLPQIPLEETELPGQGESFQIEDQIPTIPQDTLGVDFDSGEAKSTDNVLPRTVSVRSSLKKHCNSICQFDSLDDFETSHLAGKSFEFERVGFLDPLVNMHIPENVQHNACQWSKDQVNLSPKLIQPGTFTKTKEDILESKSEQTKSKQRDTQERKREEKRKANRRKSKRMSKYKENKSENKKTVPQKKMHKSVSSNDAYNFNLEEGVHLTPFRQKVSNDSNREENNESEVSLCESSGSGDDSDDLYLPTCKYIQNPTSNSDRPVTRPLAKRALKYTDEKETEGSKPTKTPTTTPPETQQSPHLSLKDITNVSLYPVVKIRRLSLSPKKNKASPAVALPKRRCTASVNYKEPTLASKLRRGDPFTDLCFLNSPIFKQKKDLRRSKKRALEVSPAKEAIFILYYVREFVSRFPDCRKCKLETHICLR.

Residues 1-176 (MAKERCLKKS…DTLGVDFDSG (176 aa)) are necessary for interaction with PPP2CA and PPP2R1A. Positions 7–89 (LKKSFQDSLE…DIILQLRKEC (83 aa)) form a coiled coil. Serine 14 is subject to Phosphoserine; by NEK2. Residues 192-200 (RSSLKKHCN) carry the D-box 1 motif. Serine 256 carries the post-translational modification Phosphoserine. Disordered regions lie at residues 260 to 331 (IQPG…SVSS) and 348 to 441 (FRQK…HLSL). Over residues 267 to 296 (KTKEDILESKSEQTKSKQRDTQERKREEKR) the composition is skewed to basic and acidic residues. The stretch at 273–313 (LESKSEQTKSKQRDTQERKREEKRKANRRKSKRMSKYKENK) forms a coiled coil. The span at 297–307 (KANRRKSKRMS) shows a compositional bias: basic residues. Over residues 308–318 (KYKENKSENKK) the composition is skewed to basic and acidic residues. The short motif at 310 to 312 (KEN) is the KEN box element. Residues 364–375 (SEVSLCESSGSG) are compositionally biased toward low complexity. Residues 388–398 (YIQNPTSNSDR) are compositionally biased toward polar residues. Over residues 410 to 421 (KYTDEKETEGSK) the composition is skewed to basic and acidic residues. A compositionally biased stretch (low complexity) spans 422-433 (PTKTPTTTPPET). Phosphoserine is present on serine 436. A D-box 2 motif is present at residues 438-446 (HLSLKDITN). The PXVXL/I motif signature appears at 451–455 (PVVKI). The D-box 3 signature appears at 457 to 465 (RLSLSPKKN). At serine 507 the chain carries Phosphoserine; by NEK2.

It belongs to the shugoshin family. As to quaternary structure, interacts with PPP2CA (or PPP2CB), PPP2R1B, PPP2R5A, PPP2R5B, PPP2R5C, PPP2R5D, PPP2R5E, SET, LRRC59, RBM10 (or RBM5), RPL10A, RPL28, RPL7, RPL7A and RPLP1. Interaction with protein phosphatase 2A occurs most probably through direct binding to the regulatory B56 subunits: PPP2R1B, PPP2R5A, PPP2R5B, PPP2R5C, PPP2R5D, PPP2R5E. Interacts with PPP2R1A and NEK2. Isoform 3 interacts with PLK1. Interacts with CDCA8. Ubiquitinated and degraded during mitotic exit by APC/C-Cdh1. In terms of processing, phosphorylation by NEK2 is essential for chromosome congression in mitosis and for the proper attachment of spindle microtubule to the kinetochore. Phosphorylated by PLK1 and AUKRB. In terms of tissue distribution, widely expressed. Highly expressed in testis. Expressed in lung, small intestine, breast, liver and placenta. Strongly overexpressed in 90% of breast cancers tested.

The protein localises to the nucleus. Its subcellular location is the chromosome. It is found in the centromere. It localises to the kinetochore. The protein resides in the cytoplasm. The protein localises to the cytoskeleton. Its subcellular location is the spindle pole. It is found in the microtubule organizing center. It localises to the centrosome. The protein resides in the nucleus speckle. Its function is as follows. Plays a central role in chromosome cohesion during mitosis by preventing premature dissociation of cohesin complex from centromeres after prophase, when most of cohesin complex dissociates from chromosomes arms. May act by preventing phosphorylation of the STAG2 subunit of cohesin complex at the centromere, ensuring cohesin persistence at centromere until cohesin cleavage by ESPL1/separase at anaphase. Essential for proper chromosome segregation during mitosis and this function requires interaction with PPP2R1A. Its phosphorylated form is necessary for chromosome congression and for the proper attachment of spindle microtubule to the kinetochore. Necessary for kinetochore localization of PLK1 and CENPF. May play a role in the tension sensing mechanism of the spindle-assembly checkpoint by regulating PLK1 kinetochore affinity. Isoform 3 plays a role in maintaining centriole cohesion involved in controlling spindle pole integrity. Involved in centromeric enrichment of AUKRB in prometaphase. The chain is Shugoshin 1 from Homo sapiens (Human).